Here is a 400-residue protein sequence, read N- to C-terminus: Argininosuccinate synthase (400 aa).

ATP-binding positions include 6-14 (AYSGGLDTS) and Ala-33. Tyr-84 and Ser-89 together coordinate L-citrulline. Gly-114 contributes to the ATP binding site. Thr-116, Asn-120, and Asp-121 together coordinate L-aspartate. Asn-120 contacts L-citrulline. L-citrulline contacts are provided by Arg-124, Ser-173, Ser-182, Glu-258, and Tyr-270.

This sequence belongs to the argininosuccinate synthase family. Type 1 subfamily. As to quaternary structure, homotetramer.

It localises to the cytoplasm. The enzyme catalyses L-citrulline + L-aspartate + ATP = 2-(N(omega)-L-arginino)succinate + AMP + diphosphate + H(+). It participates in amino-acid biosynthesis; L-arginine biosynthesis; L-arginine from L-ornithine and carbamoyl phosphate: step 2/3. In Thermus thermophilus (strain ATCC 27634 / DSM 579 / HB8), this protein is Argininosuccinate synthase.